Reading from the N-terminus, the 665-residue chain is Ribonuclease R 2 (665 aa).

Positions 202-528 constitute an RNB domain; sequence REDYRNEITY…LIIHRLLHLY (327 aa). Positions 579 to 662 constitute an S1 motif domain; it reads GEVYTGTITG…RKGTVDFEQI (84 aa).

This sequence belongs to the RNR ribonuclease family. RNase R subfamily.

The protein localises to the cytoplasm. It carries out the reaction Exonucleolytic cleavage in the 3'- to 5'-direction to yield nucleoside 5'-phosphates.. 3'-5' exoribonuclease that releases 5'-nucleoside monophosphates and is involved in maturation of structured RNAs. This chain is Ribonuclease R 2, found in Lactococcus lactis subsp. lactis (strain IL1403) (Streptococcus lactis).